Consider the following 356-residue polypeptide: Protein RecA (356 aa).

68–75 (GQESSGKT) contacts ATP.

This sequence belongs to the RecA family.

The protein localises to the cytoplasm. Can catalyze the hydrolysis of ATP in the presence of single-stranded DNA, the ATP-dependent uptake of single-stranded DNA by duplex DNA, and the ATP-dependent hybridization of homologous single-stranded DNAs. It interacts with LexA causing its activation and leading to its autocatalytic cleavage. In Thermotoga petrophila (strain ATCC BAA-488 / DSM 13995 / JCM 10881 / RKU-1), this protein is Protein RecA.